The chain runs to 106 residues: ATP-dependent Clp protease adapter protein ClpS (106 aa).

It belongs to the ClpS family. In terms of assembly, binds to the N-terminal domain of the chaperone ClpA.

Involved in the modulation of the specificity of the ClpAP-mediated ATP-dependent protein degradation. The sequence is that of ATP-dependent Clp protease adapter protein ClpS from Erwinia tasmaniensis (strain DSM 17950 / CFBP 7177 / CIP 109463 / NCPPB 4357 / Et1/99).